The primary structure comprises 322 residues: Lipoyl synthase (322 aa).

The [4Fe-4S] cluster site is built by Cys61, Cys66, Cys72, Cys87, Cys91, Cys94, and Ser300. Residues Trp73–Leu289 enclose the Radical SAM core domain.

It belongs to the radical SAM superfamily. Lipoyl synthase family. It depends on [4Fe-4S] cluster as a cofactor.

It is found in the cytoplasm. The catalysed reaction is [[Fe-S] cluster scaffold protein carrying a second [4Fe-4S](2+) cluster] + N(6)-octanoyl-L-lysyl-[protein] + 2 oxidized [2Fe-2S]-[ferredoxin] + 2 S-adenosyl-L-methionine + 4 H(+) = [[Fe-S] cluster scaffold protein] + N(6)-[(R)-dihydrolipoyl]-L-lysyl-[protein] + 4 Fe(3+) + 2 hydrogen sulfide + 2 5'-deoxyadenosine + 2 L-methionine + 2 reduced [2Fe-2S]-[ferredoxin]. It participates in protein modification; protein lipoylation via endogenous pathway; protein N(6)-(lipoyl)lysine from octanoyl-[acyl-carrier-protein]: step 2/2. Its function is as follows. Catalyzes the radical-mediated insertion of two sulfur atoms into the C-6 and C-8 positions of the octanoyl moiety bound to the lipoyl domains of lipoate-dependent enzymes, thereby converting the octanoylated domains into lipoylated derivatives. This is Lipoyl synthase from Rhizobium meliloti (strain 1021) (Ensifer meliloti).